The chain runs to 359 residues: Peptide chain release factor 1 (359 aa).

Q236 carries the N5-methylglutamine modification.

The protein belongs to the prokaryotic/mitochondrial release factor family. Post-translationally, methylated by PrmC. Methylation increases the termination efficiency of RF1.

It localises to the cytoplasm. Its function is as follows. Peptide chain release factor 1 directs the termination of translation in response to the peptide chain termination codons UAG and UAA. The polypeptide is Peptide chain release factor 1 (Lacticaseibacillus casei (strain BL23) (Lactobacillus casei)).